We begin with the raw amino-acid sequence, 363 residues long: Phospho-N-acetylmuramoyl-pentapeptide-transferase (363 aa).

10 helical membrane passes run 3–23 (QILF…PLLI), 48–68 (GTPT…YFLA), 83–103 (PTFS…VGFL), 121–141 (AKMI…LQFA), 159–179 (FGWT…ILAM), 192–212 (LATG…VWQF), 234–254 (PLDL…FLWW), 261–281 (IFMG…LAIC), 286–306 (LLMA…VIQV), and 340–360 (FWII…AGWA).

The protein belongs to the glycosyltransferase 4 family. MraY subfamily. Mg(2+) is required as a cofactor.

It localises to the cell membrane. The enzyme catalyses UDP-N-acetyl-alpha-D-muramoyl-L-alanyl-gamma-D-glutamyl-meso-2,6-diaminopimeloyl-D-alanyl-D-alanine + di-trans,octa-cis-undecaprenyl phosphate = di-trans,octa-cis-undecaprenyl diphospho-N-acetyl-alpha-D-muramoyl-L-alanyl-D-glutamyl-meso-2,6-diaminopimeloyl-D-alanyl-D-alanine + UMP. Its pathway is cell wall biogenesis; peptidoglycan biosynthesis. Its function is as follows. Catalyzes the initial step of the lipid cycle reactions in the biosynthesis of the cell wall peptidoglycan: transfers peptidoglycan precursor phospho-MurNAc-pentapeptide from UDP-MurNAc-pentapeptide onto the lipid carrier undecaprenyl phosphate, yielding undecaprenyl-pyrophosphoryl-MurNAc-pentapeptide, known as lipid I. The protein is Phospho-N-acetylmuramoyl-pentapeptide-transferase of Streptomyces coelicolor (strain ATCC BAA-471 / A3(2) / M145).